The primary structure comprises 433 residues: Xylose isomerase (433 aa).

Catalysis depends on residues histidine 99 and aspartate 102. The Mg(2+) site is built by glutamate 230, glutamate 266, histidine 269, aspartate 294, aspartate 305, aspartate 307, and aspartate 337.

This sequence belongs to the xylose isomerase family. Homotetramer. It depends on Mg(2+) as a cofactor.

Its subcellular location is the cytoplasm. It catalyses the reaction alpha-D-xylose = alpha-D-xylulofuranose. The sequence is that of Xylose isomerase from Roseobacter denitrificans (strain ATCC 33942 / OCh 114) (Erythrobacter sp. (strain OCh 114)).